We begin with the raw amino-acid sequence, 47 residues long: Accessory gland peptide Acp33A (47 aa).

A signal peptide spans 1–21; that stretch reads MLPSKRVPFLFTIILFLAGLG.

In terms of tissue distribution, main cells of accessory gland and seminal fluid.

It is found in the secreted. In terms of biological role, responsible for physiological and behavioral changes in mated female flies. This Drosophila melanogaster (Fruit fly) protein is Accessory gland peptide Acp33A (Acp33A).